A 59-amino-acid chain; its full sequence is Temperature acclimation protein A (59 aa).

A CSD domain is found at 1-55 (FNDEKGFGFITPESGPDLFVHFRAIQGNGFKSLKEGQKVTFIAVQGQKGMQADKV).

The protein resides in the cytoplasm. Its function is as follows. Affects cell viability at low temperatures. This Pseudomonas fragi protein is Temperature acclimation protein A (tapA).